The sequence spans 95 residues: FXYD domain-containing ion transport regulator 6 (95 aa).

The N-terminal stretch at M1 to A18 is a signal peptide. Residues S19–Q35 lie on the Extracellular side of the membrane. Residues T36 to S58 form a helical membrane-spanning segment. Over R59–N95 the chain is Cytoplasmic. The interval P69 to N95 is disordered.

Belongs to the FXYD family. Regulatory subunit of the sodium/potassium-transporting ATPase which is composed of a catalytic alpha subunit, a non-catalytic beta subunit and an additional regulatory subunit. The regulatory subunit, a member of the FXYD protein family, modulates the enzymatic activity in a tissue- and isoform-specific way by changing affinities of the Na+/K+-ATPase toward Na(+), K(+) or ATP.

The protein resides in the cell membrane. Its function is as follows. Associates with and regulates the activity of the sodium/potassium-transporting ATPase (NKA) which catalyzes the hydrolysis of ATP coupled with the exchange of Na(+) and K(+) ions across the plasma membrane. Reduces the apparent affinity for intracellular Na(+) with no change in the apparent affinity for extracellular K(+). In addition to modulating NKA kinetics, may also function as a regulator of NKA localization to the plasma membrane. This is FXYD domain-containing ion transport regulator 6 (FXYD6) from Bos taurus (Bovine).